A 524-amino-acid polypeptide reads, in one-letter code: 11-oxo-beta-amyrin 30-oxidase (524 aa).

The chain crosses the membrane as a helical span at residues G9–L29. Heme is bound at residue C472.

The protein belongs to the cytochrome P450 family. Heme serves as cofactor. As to expression, expressed in flowers. Detected in roots upon salt treatment.

It is found in the membrane. It catalyses the reaction 11-oxo-beta-amyrin + 3 reduced [NADPH--hemoprotein reductase] + 3 O2 = glycyrrhetinate + 3 oxidized [NADPH--hemoprotein reductase] + 4 H2O + 4 H(+). In terms of biological role, involved in the biosynthesis of triterpenoid saponins. Catalyzes three sequential oxidation steps at C-30 of 11-oxo-beta-amyrin. Also able to catalyze sequential C-30 hydroxylation of beta-amyrin to produce 30-hydroxy-beta-amyrin and 11-deoxoglycyrrhetinic acid. The chain is 11-oxo-beta-amyrin 30-oxidase (CYP72A63) from Medicago truncatula (Barrel medic).